A 337-amino-acid chain; its full sequence is Ketol-acid reductoisomerase (NADP(+)) (337 aa).

The region spanning 3 to 183 (VEMFYDDDAD…GGARAGVIKT (181 aa)) is the KARI N-terminal Rossmann domain. Residues 26–29 (YGSQ), K49, S52, S54, and 84–87 (DTAQ) each bind NADP(+). H109 is a catalytic residue. G135 contributes to the NADP(+) binding site. Residues 184–329 (TFKEETETDL…KKLRDLMSWV (146 aa)) enclose the KARI C-terminal knotted domain. Residues D192, E196, E228, and E232 each contribute to the Mg(2+) site. S253 contributes to the substrate binding site.

It belongs to the ketol-acid reductoisomerase family. It depends on Mg(2+) as a cofactor.

It carries out the reaction (2R)-2,3-dihydroxy-3-methylbutanoate + NADP(+) = (2S)-2-acetolactate + NADPH + H(+). The catalysed reaction is (2R,3R)-2,3-dihydroxy-3-methylpentanoate + NADP(+) = (S)-2-ethyl-2-hydroxy-3-oxobutanoate + NADPH + H(+). It functions in the pathway amino-acid biosynthesis; L-isoleucine biosynthesis; L-isoleucine from 2-oxobutanoate: step 2/4. Its pathway is amino-acid biosynthesis; L-valine biosynthesis; L-valine from pyruvate: step 2/4. Its function is as follows. Involved in the biosynthesis of branched-chain amino acids (BCAA). Catalyzes an alkyl-migration followed by a ketol-acid reduction of (S)-2-acetolactate (S2AL) to yield (R)-2,3-dihydroxy-isovalerate. In the isomerase reaction, S2AL is rearranged via a Mg-dependent methyl migration to produce 3-hydroxy-3-methyl-2-ketobutyrate (HMKB). In the reductase reaction, this 2-ketoacid undergoes a metal-dependent reduction by NADPH to yield (R)-2,3-dihydroxy-isovalerate. The protein is Ketol-acid reductoisomerase (NADP(+)) of Mycobacterium sp. (strain JLS).